The primary structure comprises 434 residues: Glycoprotein U20 (434 aa).

Positions 1–15 (MITVFVACLFQCVSS) are cleaved as a signal peptide. Residues 322 to 342 (LLWIFIVIPIAAGCMFLYILT) form a helical membrane-spanning segment.

Its subcellular location is the host endoplasmic reticulum membrane. It is found in the host lysosome membrane. Its function is as follows. Plays a role in the down-regulation of the host stress-induced NKG2D ligand UBPL1, which enables immune cells expressing the NKG2D receptor to recognize and annihilate infected cells prior to viral spread. This chain is Glycoprotein U20 (U20), found in Human herpesvirus 6B (strain Z29) (HHV-6 variant B).